Consider the following 37-residue polypeptide: MKKRASVRKICQKCRLTRRRGRIRVICSNPRHKKRQG.

This sequence belongs to the bacterial ribosomal protein bL36 family.

It localises to the plastid. Its subcellular location is the chloroplast. This is Large ribosomal subunit protein bL36c from Jasminum nudiflorum (Winter jasmine).